Here is a 262-residue protein sequence, read N- to C-terminus: Phosphonates import ATP-binding protein PhnC (262 aa).

The region spanning 5–253 (IRVEKLAKTF…RFDHLYRSIN (249 aa)) is the ABC transporter domain. 37 to 44 (GPSGSGKS) contacts ATP.

It belongs to the ABC transporter superfamily. Phosphonates importer (TC 3.A.1.9.1) family. As to quaternary structure, the complex is composed of two ATP-binding proteins (PhnC), two transmembrane proteins (PhnE) and a solute-binding protein (PhnD).

Its subcellular location is the cell inner membrane. The catalysed reaction is phosphonate(out) + ATP + H2O = phosphonate(in) + ADP + phosphate + H(+). Its function is as follows. Part of the ABC transporter complex PhnCDE involved in phosphonates import. Responsible for energy coupling to the transport system. The polypeptide is Phosphonates import ATP-binding protein PhnC (Escherichia coli O6:K15:H31 (strain 536 / UPEC)).